The following is a 309-amino-acid chain: Oxygen-dependent coproporphyrinogen-III oxidase (309 aa).

A substrate-binding site is contributed by serine 94. A divalent metal cation contacts are provided by histidine 98 and histidine 108. The active-site Proton donor is the histidine 108. Residue 110 to 112 (NVR) participates in substrate binding. A divalent metal cation-binding residues include histidine 147 and histidine 177. Residues 242-277 (YVEFNLVWDRGTLFGLQTGGRTESILMSLPPLVRWE) are important for dimerization. A substrate-binding site is contributed by 260 to 262 (GGR).

This sequence belongs to the aerobic coproporphyrinogen-III oxidase family. Homodimer. The cofactor is a divalent metal cation.

The protein resides in the cytoplasm. It catalyses the reaction coproporphyrinogen III + O2 + 2 H(+) = protoporphyrinogen IX + 2 CO2 + 2 H2O. The protein operates within porphyrin-containing compound metabolism; protoporphyrin-IX biosynthesis; protoporphyrinogen-IX from coproporphyrinogen-III (O2 route): step 1/1. Functionally, involved in the heme biosynthesis. Catalyzes the aerobic oxidative decarboxylation of propionate groups of rings A and B of coproporphyrinogen-III to yield the vinyl groups in protoporphyrinogen-IX. This Yersinia pestis bv. Antiqua (strain Antiqua) protein is Oxygen-dependent coproporphyrinogen-III oxidase.